A 242-amino-acid chain; its full sequence is 7-cyano-7-deazaguanine synthase (242 aa).

The segment at 1–25 (MNSRKDKNSKGKNSDTKRKKSSQEN) is disordered. Residue 32–42 (LSGGLDSTTCL) coordinates ATP. Cys212, Cys221, Cys224, and Cys227 together coordinate Zn(2+).

Belongs to the QueC family. It depends on Zn(2+) as a cofactor.

It carries out the reaction 7-carboxy-7-deazaguanine + NH4(+) + ATP = 7-cyano-7-deazaguanine + ADP + phosphate + H2O + H(+). The protein operates within purine metabolism; 7-cyano-7-deazaguanine biosynthesis. Catalyzes the ATP-dependent conversion of 7-carboxy-7-deazaguanine (CDG) to 7-cyano-7-deazaguanine (preQ(0)). In Leptospira borgpetersenii serovar Hardjo-bovis (strain JB197), this protein is 7-cyano-7-deazaguanine synthase.